Consider the following 177-residue polypeptide: Large ribosomal subunit protein uL6 (177 aa).

The protein belongs to the universal ribosomal protein uL6 family. As to quaternary structure, part of the 50S ribosomal subunit.

In terms of biological role, this protein binds to the 23S rRNA, and is important in its secondary structure. It is located near the subunit interface in the base of the L7/L12 stalk, and near the tRNA binding site of the peptidyltransferase center. This is Large ribosomal subunit protein uL6 from Glaesserella parasuis serovar 5 (strain SH0165) (Haemophilus parasuis).